The primary structure comprises 261 residues: Cytochrome c oxidase subunit 3 (261 aa).

The Mitochondrial matrix segment spans residues 1 to 15 (MTHQTHAYHMVNPSP). A helical transmembrane segment spans residues 16–34 (WPLTGALSALLMTSGLIMW). The Mitochondrial intermembrane portion of the chain corresponds to 35 to 40 (FHFNST). The helical transmembrane segment at 41–66 (ILLMLGLTTNMLTMYQWWRDIIREST) threads the bilayer. Residues 67 to 72 (FQGHHT) lie on the Mitochondrial matrix side of the membrane. The chain crosses the membrane as a helical span at residues 73-105 (PTVQKGLRYGMILFIISEVLFFTGFFWAFYHSS). At 106-128 (LAPTPELGGCWPPTGIHPLNPLE) the chain is on the mitochondrial intermembrane side. The chain crosses the membrane as a helical span at residues 129–152 (VPLLNTSVLLASGVSITWAHHSLM). Residues 153–155 (EGN) lie on the Mitochondrial matrix side of the membrane. Residues 156–183 (RNHMLQALFITIALGVYFTLLQASEYYE) form a helical membrane-spanning segment. The Mitochondrial intermembrane segment spans residues 184–190 (APFTISD). A helical membrane pass occupies residues 191–223 (GVYGSTFFVATGFHGLHVIIGSTFLIVCFFRQL). Residues 224-232 (KFHFTSSHH) lie on the Mitochondrial matrix side of the membrane. The chain crosses the membrane as a helical span at residues 233–256 (FGFEAAAWYWHFVDVVWLFLYVSI). Residues 257–261 (YWWGS) are Mitochondrial intermembrane-facing.

It belongs to the cytochrome c oxidase subunit 3 family. Component of the cytochrome c oxidase (complex IV, CIV), a multisubunit enzyme composed of 14 subunits. The complex is composed of a catalytic core of 3 subunits MT-CO1, MT-CO2 and MT-CO3, encoded in the mitochondrial DNA, and 11 supernumerary subunits COX4I, COX5A, COX5B, COX6A, COX6B, COX6C, COX7A, COX7B, COX7C, COX8 and NDUFA4, which are encoded in the nuclear genome. The complex exists as a monomer or a dimer and forms supercomplexes (SCs) in the inner mitochondrial membrane with NADH-ubiquinone oxidoreductase (complex I, CI) and ubiquinol-cytochrome c oxidoreductase (cytochrome b-c1 complex, complex III, CIII), resulting in different assemblies (supercomplex SCI(1)III(2)IV(1) and megacomplex MCI(2)III(2)IV(2)).

Its subcellular location is the mitochondrion inner membrane. It catalyses the reaction 4 Fe(II)-[cytochrome c] + O2 + 8 H(+)(in) = 4 Fe(III)-[cytochrome c] + 2 H2O + 4 H(+)(out). Component of the cytochrome c oxidase, the last enzyme in the mitochondrial electron transport chain which drives oxidative phosphorylation. The respiratory chain contains 3 multisubunit complexes succinate dehydrogenase (complex II, CII), ubiquinol-cytochrome c oxidoreductase (cytochrome b-c1 complex, complex III, CIII) and cytochrome c oxidase (complex IV, CIV), that cooperate to transfer electrons derived from NADH and succinate to molecular oxygen, creating an electrochemical gradient over the inner membrane that drives transmembrane transport and the ATP synthase. Cytochrome c oxidase is the component of the respiratory chain that catalyzes the reduction of oxygen to water. Electrons originating from reduced cytochrome c in the intermembrane space (IMS) are transferred via the dinuclear copper A center (CU(A)) of subunit 2 and heme A of subunit 1 to the active site in subunit 1, a binuclear center (BNC) formed by heme A3 and copper B (CU(B)). The BNC reduces molecular oxygen to 2 water molecules using 4 electrons from cytochrome c in the IMS and 4 protons from the mitochondrial matrix. The polypeptide is Cytochrome c oxidase subunit 3 (MT-CO3) (Aepyceros melampus (Impala)).